Consider the following 452-residue polypeptide: tRNA modification GTPase MnmE (452 aa).

Arg22, Glu79, and Lys119 together coordinate (6S)-5-formyl-5,6,7,8-tetrahydrofolate. One can recognise a TrmE-type G domain in the interval 215-375 (GMKVVIAGRP…LRQHLKQSMG (161 aa)). Asn225 contacts K(+). GTP-binding positions include 225-230 (NAGKSS), 244-250 (TDIAGTT), 269-272 (DTAG), and 333-336 (NKAD). Ser229 is a binding site for Mg(2+). Residues Thr244, Ile246, and Thr249 each coordinate K(+). Thr250 contributes to the Mg(2+) binding site. Lys452 serves as a coordination point for (6S)-5-formyl-5,6,7,8-tetrahydrofolate.

Belongs to the TRAFAC class TrmE-Era-EngA-EngB-Septin-like GTPase superfamily. TrmE GTPase family. In terms of assembly, homodimer. Heterotetramer of two MnmE and two MnmG subunits. K(+) is required as a cofactor.

Its subcellular location is the cytoplasm. In terms of biological role, exhibits a very high intrinsic GTPase hydrolysis rate. Involved in the addition of a carboxymethylaminomethyl (cmnm) group at the wobble position (U34) of certain tRNAs, forming tRNA-cmnm(5)s(2)U34. The protein is tRNA modification GTPase MnmE of Histophilus somni (strain 129Pt) (Haemophilus somnus).